A 641-amino-acid polypeptide reads, in one-letter code: MSKIIGIDLGTTNSCIALLDGDKPRVIENAEGERTTASVIAYTQDGEILVGQPAKRQAVTNPKNTLFAIKRLLGRRFEDEEVQRDIEIMPFNIVKADNGDAWVEAKGKKMAAPQVSAEVLKKMKKTAEDYLGEEVTGAVITVPAYFNDAQRQATKDAGRIAGLDVKRIINEPTAAALAYGLDKQGGERTIAVYDLGGGTFDISIIEIDEVDGEKTFEVLSTNGDTHLGGEDFDNRMINYLVGEFKKEQGIDLKSDPLAMQRVKEAAEKAKIELSSAQQTDVNLPYVTADAAGPKHMNVKVTRAKLESLVEDLVQRTLEPLKIALTDANLSITDITDVILVGGQTRMPMVQAKVTEFFGKEPRKDVNPDEAVAVGAAIQAGVLAGEVKDVLLLDVTPLSLGIETMGGVMTKLIEKNTTIPTKANQVFSTAEDNQSAVTIHVLQGERKQSSYNKSLGQFNLEGIQAGSRGTAQIDVTFDLDADGILHVSATDKATNKEQKITIQASGGLSNDDIEKMVQEAEANKEADKMFEELVTARNQADQLVHSTRKQVEELGDALPADEKAKIDTAIADVETALKGEDKAAIDNATQALMTASQALVQMAQQQAQAQHAQSSQQTNDTTGQSSTDDDVFEAEFEEVKDK.

At Thr199 the chain carries Phosphothreonine; by autocatalysis. Residues 601-616 show a composition bias toward low complexity; sequence MAQQQAQAQHAQSSQQ. A disordered region spans residues 601–641; sequence MAQQQAQAQHAQSSQQTNDTTGQSSTDDDVFEAEFEEVKDK. Over residues 626-635 the composition is skewed to acidic residues; it reads TDDDVFEAEF.

The protein belongs to the heat shock protein 70 family.

Acts as a chaperone. In Photobacterium profundum (strain SS9), this protein is Chaperone protein DnaK 2.